The sequence spans 858 residues: Bifunctional uridylyltransferase/uridylyl-removing enzyme (858 aa).

The uridylyltransferase stretch occupies residues 1–324 (MSASVAEPPP…PATSGVTRVL (324 aa)). Residues 325–681 (SPGRFVEKQG…ARPSPVGDAL (357 aa)) form a uridylyl-removing region. Positions 443-565 (VDQHILMVLR…VGSERRLTAL (123 aa)) constitute an HD domain. ACT domains are found at residues 682-761 (QVLV…PEPS) and 790-858 (ILSV…AIAV).

It belongs to the GlnD family. It depends on Mg(2+) as a cofactor.

It carries out the reaction [protein-PII]-L-tyrosine + UTP = [protein-PII]-uridylyl-L-tyrosine + diphosphate. The enzyme catalyses [protein-PII]-uridylyl-L-tyrosine + H2O = [protein-PII]-L-tyrosine + UMP + H(+). With respect to regulation, uridylyltransferase (UTase) activity is inhibited by glutamine, while glutamine activates uridylyl-removing (UR) activity. Its function is as follows. Modifies, by uridylylation and deuridylylation, the PII regulatory proteins (GlnB and homologs), in response to the nitrogen status of the cell that GlnD senses through the glutamine level. Under low glutamine levels, catalyzes the conversion of the PII proteins and UTP to PII-UMP and PPi, while under higher glutamine levels, GlnD hydrolyzes PII-UMP to PII and UMP (deuridylylation). Thus, controls uridylylation state and activity of the PII proteins, and plays an important role in the regulation of nitrogen assimilation and metabolism. The protein is Bifunctional uridylyltransferase/uridylyl-removing enzyme of Burkholderia mallei (strain ATCC 23344).